A 367-amino-acid polypeptide reads, in one-letter code: Glutamate 5-kinase (367 aa).

K10 provides a ligand contact to ATP. The substrate site is built by S50, D137, and N149. ATP contacts are provided by residues 169–170 (TD) and 211–217 (TGGMSTK). The 79-residue stretch at 275-353 (AGEITVDEGA…QEIDAILGYE (79 aa)) folds into the PUA domain.

The protein belongs to the glutamate 5-kinase family.

It is found in the cytoplasm. The enzyme catalyses L-glutamate + ATP = L-glutamyl 5-phosphate + ADP. It functions in the pathway amino-acid biosynthesis; L-proline biosynthesis; L-glutamate 5-semialdehyde from L-glutamate: step 1/2. Its function is as follows. Catalyzes the transfer of a phosphate group to glutamate to form L-glutamate 5-phosphate. This chain is Glutamate 5-kinase, found in Shigella flexneri.